Reading from the N-terminus, the 158-residue chain is NAD(P)H-quinone oxidoreductase subunit J, chloroplastic (158 aa).

This sequence belongs to the complex I 30 kDa subunit family. As to quaternary structure, NDH is composed of at least 16 different subunits, 5 of which are encoded in the nucleus.

It localises to the plastid. The protein localises to the chloroplast thylakoid membrane. It catalyses the reaction a plastoquinone + NADH + (n+1) H(+)(in) = a plastoquinol + NAD(+) + n H(+)(out). The catalysed reaction is a plastoquinone + NADPH + (n+1) H(+)(in) = a plastoquinol + NADP(+) + n H(+)(out). NDH shuttles electrons from NAD(P)H:plastoquinone, via FMN and iron-sulfur (Fe-S) centers, to quinones in the photosynthetic chain and possibly in a chloroplast respiratory chain. The immediate electron acceptor for the enzyme in this species is believed to be plastoquinone. Couples the redox reaction to proton translocation, and thus conserves the redox energy in a proton gradient. In Solanum tuberosum (Potato), this protein is NAD(P)H-quinone oxidoreductase subunit J, chloroplastic.